Consider the following 325-residue polypeptide: Probable tRNA pseudouridine synthase B (325 aa).

Aspartate 69 (nucleophile) is an active-site residue. One can recognise a PUA domain in the interval leucine 236–methionine 311.

It belongs to the pseudouridine synthase TruB family. Type 2 subfamily.

It catalyses the reaction uridine(55) in tRNA = pseudouridine(55) in tRNA. Its function is as follows. Could be responsible for synthesis of pseudouridine from uracil-55 in the psi GC loop of transfer RNAs. This chain is Probable tRNA pseudouridine synthase B, found in Archaeoglobus fulgidus (strain ATCC 49558 / DSM 4304 / JCM 9628 / NBRC 100126 / VC-16).